Here is an 888-residue protein sequence, read N- to C-terminus: Bifunctional uridylyltransferase/uridylyl-removing enzyme (888 aa).

The uridylyltransferase stretch occupies residues 1–338 (MIITSPLLDY…LPNYERKIEE (338 aa)). The interval 182–204 (EQAKRHAQHNNTESNLEPDIKNA) is disordered. The segment at 339–699 (INENFKLVDG…AHRQSAQDAV (361 aa)) is uridylyl-removing. Residues 457–579 (VDAHTLLLIR…LGDMEHLDYL (123 aa)) form the HD domain. 2 consecutive ACT domains span residues 700 to 781 (QIFI…GLMQ) and 809 to 887 (MVEI…IVSQ).

The protein belongs to the GlnD family. It depends on Mg(2+) as a cofactor.

It carries out the reaction [protein-PII]-L-tyrosine + UTP = [protein-PII]-uridylyl-L-tyrosine + diphosphate. The enzyme catalyses [protein-PII]-uridylyl-L-tyrosine + H2O = [protein-PII]-L-tyrosine + UMP + H(+). Uridylyltransferase (UTase) activity is inhibited by glutamine, while glutamine activates uridylyl-removing (UR) activity. In terms of biological role, modifies, by uridylylation and deuridylylation, the PII regulatory proteins (GlnB and homologs), in response to the nitrogen status of the cell that GlnD senses through the glutamine level. Under low glutamine levels, catalyzes the conversion of the PII proteins and UTP to PII-UMP and PPi, while under higher glutamine levels, GlnD hydrolyzes PII-UMP to PII and UMP (deuridylylation). Thus, controls uridylylation state and activity of the PII proteins, and plays an important role in the regulation of nitrogen assimilation and metabolism. The sequence is that of Bifunctional uridylyltransferase/uridylyl-removing enzyme from Acinetobacter baylyi (strain ATCC 33305 / BD413 / ADP1).